Consider the following 402-residue polypeptide: uncharacterized protein (402 aa).

Residues 1–11 are Cytoplasmic-facing; the sequence is MTPSNYQRTRW. Residues 12 to 34 form a helical membrane-spanning segment; it reads LTLIGTIITQFALGSVYTWSLFN. At 35–43 the chain is on the periplasmic side; the sequence is GALSAKLDA. A helical transmembrane segment spans residues 44-66; that stretch reads PVSQVAFSFGLLSLGLAISSSVA. Over 67–72 the chain is Cytoplasmic; that stretch reads GKLQER. A helical membrane pass occupies residues 73–95; it reads FGVKRVTMASGILLGLGFFLTAH. At 96 to 99 the chain is on the periplasmic side; sequence SDNL. Residues 100–122 form a helical membrane-spanning segment; it reads MMLWLSAGVLVGLADGAGYLLTL. Residues 123 to 134 are Cytoplasmic-facing; that stretch reads SNCVKWFPERKG. Residues 135–154 form a helical membrane-spanning segment; it reads LISAFAIGSYGLGSLGFKFI. The Periplasmic portion of the chain corresponds to 155–168; that stretch reads DTQLLETVGLEKTF. The helical transmembrane segment at 169 to 186 threads the bilayer; sequence VIWGAIALLMIVFGATLM. Residues 187-216 are Cytoplasmic-facing; it reads KDAPKQEVKTSNGVVEKDYTLAESMRKPQY. Residues 217 to 236 form a helical membrane-spanning segment; it reads WMLAVMFLTACMSGLYVIGV. Over 237-250 the chain is Periplasmic; it reads AKDIAQSLAHLDVV. The chain crosses the membrane as a helical span at residues 251-273; that stretch reads SAANAVTVISIANLSGRLVLGIL. The Cytoplasmic segment spans residues 274–279; sequence SDKIAR. Residues 280-302 form a helical membrane-spanning segment; sequence IRVITIGQVISLVGMAALLFAPL. Topologically, residues 303 to 306 are periplasmic; it reads NAVT. The helical transmembrane segment at 307-329 threads the bilayer; that stretch reads FFAAIACVAFNFGGTITVFPSLV. At 330 to 341 the chain is on the cytoplasmic side; sequence SEFFGLNNLAKN. Residues 342–364 traverse the membrane as a helical segment; that stretch reads YGVIYLGFGIGSICGSIIASLFG. The Periplasmic segment spans residues 365–367; the sequence is GFY. A helical membrane pass occupies residues 368-387; it reads VTFYVIFALLILSLALSTTI. At 388–402 the chain is on the cytoplasmic side; it reads RQPEQKMLREAHGSL.

Belongs to the major facilitator superfamily. Interacts with BtsS and YpdA.

It is found in the cell inner membrane. In terms of biological role, part of a nutrient-sensing regulatory network composed of the two-component regulatory systems BtsS/BtsR and YpdA/YpdB, and their respective target proteins, BtsT and YhjX. This is an uncharacterized protein from Escherichia coli (strain K12).